A 507-amino-acid polypeptide reads, in one-letter code: Anaerobic nitric oxide reductase transcription regulator NorR (507 aa).

4-aspartylphosphate is present on Asp57. The 230-residue stretch at 188-417 (IIGLSSVMQQ…LEHSIYRAAI (230 aa)) folds into the Sigma-54 factor interaction domain. Residues 216–223 (GETGVGKE) and 279–288 (ADNGTLFLDE) each bind ATP. Residues 483–502 (WAATARKLELDSGNLHRLAK) constitute a DNA-binding region (H-T-H motif).

Its pathway is nitrogen metabolism; nitric oxide reduction. In terms of biological role, required for the expression of anaerobic nitric oxide (NO) reductase, acts as a transcriptional activator for at least the norVW operon. Activation also requires sigma-54. This is Anaerobic nitric oxide reductase transcription regulator NorR from Serratia proteamaculans (strain 568).